We begin with the raw amino-acid sequence, 251 residues long: Ubiquinone/menaquinone biosynthesis C-methyltransferase UbiE (251 aa).

S-adenosyl-L-methionine is bound by residues threonine 74, aspartate 95, and 123-124 (NA).

The protein belongs to the class I-like SAM-binding methyltransferase superfamily. MenG/UbiE family.

It carries out the reaction a 2-demethylmenaquinol + S-adenosyl-L-methionine = a menaquinol + S-adenosyl-L-homocysteine + H(+). It catalyses the reaction a 2-methoxy-6-(all-trans-polyprenyl)benzene-1,4-diol + S-adenosyl-L-methionine = a 5-methoxy-2-methyl-3-(all-trans-polyprenyl)benzene-1,4-diol + S-adenosyl-L-homocysteine + H(+). It participates in quinol/quinone metabolism; menaquinone biosynthesis; menaquinol from 1,4-dihydroxy-2-naphthoate: step 2/2. Its pathway is cofactor biosynthesis; ubiquinone biosynthesis. Methyltransferase required for the conversion of demethylmenaquinol (DMKH2) to menaquinol (MKH2) and the conversion of 2-polyprenyl-6-methoxy-1,4-benzoquinol (DDMQH2) to 2-polyprenyl-3-methyl-6-methoxy-1,4-benzoquinol (DMQH2). The chain is Ubiquinone/menaquinone biosynthesis C-methyltransferase UbiE from Erwinia tasmaniensis (strain DSM 17950 / CFBP 7177 / CIP 109463 / NCPPB 4357 / Et1/99).